We begin with the raw amino-acid sequence, 31 residues long: Cytochrome b6-f complex subunit 6 (31 aa).

A helical transmembrane segment spans residues isoleucine 4–glycine 24.

Belongs to the PetL family. In terms of assembly, the 4 large subunits of the cytochrome b6-f complex are cytochrome b6, subunit IV (17 kDa polypeptide, PetD), cytochrome f and the Rieske protein, while the 4 small subunits are PetG, PetL, PetM and PetN. The complex functions as a dimer.

Its subcellular location is the plastid. The protein resides in the chloroplast thylakoid membrane. In terms of biological role, component of the cytochrome b6-f complex, which mediates electron transfer between photosystem II (PSII) and photosystem I (PSI), cyclic electron flow around PSI, and state transitions. PetL is important for photoautotrophic growth as well as for electron transfer efficiency and stability of the cytochrome b6-f complex. The sequence is that of Cytochrome b6-f complex subunit 6 from Hamamelis virginiana (Witch-hazel).